Reading from the N-terminus, the 179-residue chain is Cytochrome b6-f complex iron-sulfur subunit (179 aa).

Residues 21 to 43 (LLTFGTVTGVALGALYPVVNYFI) traverse the membrane as a helical segment. One can recognise a Rieske domain in the interval 61–162 (GNDVSVTKFL…TNVSDDKIVL (102 aa)). The [2Fe-2S] cluster site is built by Cys-108, His-110, Cys-126, and His-129. Residues Cys-113 and Cys-128 are joined by a disulfide bond.

Belongs to the Rieske iron-sulfur protein family. As to quaternary structure, the 4 large subunits of the cytochrome b6-f complex are cytochrome b6, subunit IV (17 kDa polypeptide, PetD), cytochrome f and the Rieske protein, while the 4 small subunits are PetG, PetL, PetM and PetN. The complex functions as a dimer. It depends on [2Fe-2S] cluster as a cofactor.

Its subcellular location is the cellular thylakoid membrane. It carries out the reaction 2 oxidized [plastocyanin] + a plastoquinol + 2 H(+)(in) = 2 reduced [plastocyanin] + a plastoquinone + 4 H(+)(out). Functionally, component of the cytochrome b6-f complex, which mediates electron transfer between photosystem II (PSII) and photosystem I (PSI), cyclic electron flow around PSI, and state transitions. This is Cytochrome b6-f complex iron-sulfur subunit from Nostoc punctiforme (strain ATCC 29133 / PCC 73102).